Consider the following 360-residue polypeptide: Photosystem II protein D1 (360 aa).

The next 3 membrane-spanning stretches (helical) occupy residues 29 to 46, 118 to 133, and 142 to 156; these read YIGW…SAIS, HFFI…EWEL, and WICV…AAAA. His-118 lines the chlorophyll a pocket. Tyr-126 serves as a coordination point for pheophytin a. [CaMn4O5] cluster-binding residues include Asp-170 and Glu-189. A helical transmembrane segment spans residues 197–218; sequence FHMLGVAGVFGGSLFSAMHGSL. His-198 is a binding site for chlorophyll a. Residues His-215 and 264 to 265 each bind a quinone; that span reads SF. His-215 is a Fe cation binding site. His-272 contributes to the Fe cation binding site. The chain crosses the membrane as a helical span at residues 274–288; the sequence is FLGAWPVVGIWFTAM. Positions 332, 333, 342, and 344 each coordinate [CaMn4O5] cluster. A propeptide spanning residues 345–360 is cleaved from the precursor; that stretch reads AGESLPVALVAPAVAA.

It belongs to the reaction center PufL/M/PsbA/D family. In terms of assembly, PSII is composed of 1 copy each of membrane proteins PsbA, PsbB, PsbC, PsbD, PsbE, PsbF, PsbH, PsbI, PsbJ, PsbK, PsbL, PsbM, PsbT, PsbX, PsbY, PsbZ, Psb30/Ycf12, at least 3 peripheral proteins of the oxygen-evolving complex and a large number of cofactors. It forms dimeric complexes. The D1/D2 heterodimer binds P680, chlorophylls that are the primary electron donor of PSII, and subsequent electron acceptors. It shares a non-heme iron and each subunit binds pheophytin, quinone, additional chlorophylls, carotenoids and lipids. D1 provides most of the ligands for the Mn4-Ca-O5 cluster of the oxygen-evolving complex (OEC). There is also a Cl(-1) ion associated with D1 and D2, which is required for oxygen evolution. The PSII complex binds additional chlorophylls, carotenoids and specific lipids. serves as cofactor. Tyr-161 forms a radical intermediate that is referred to as redox-active TyrZ, YZ or Y-Z. Post-translationally, C-terminally processed by CTPA; processing is essential to allow assembly of the oxygen-evolving complex and thus photosynthetic growth.

Its subcellular location is the plastid. The protein resides in the chloroplast thylakoid membrane. The enzyme catalyses 2 a plastoquinone + 4 hnu + 2 H2O = 2 a plastoquinol + O2. In terms of biological role, photosystem II (PSII) is a light-driven water:plastoquinone oxidoreductase that uses light energy to abstract electrons from H(2)O, generating O(2) and a proton gradient subsequently used for ATP formation. It consists of a core antenna complex that captures photons, and an electron transfer chain that converts photonic excitation into a charge separation. The D1/D2 (PsbA/PsbD) reaction center heterodimer binds P680, the primary electron donor of PSII as well as several subsequent electron acceptors. In Emiliania huxleyi (Coccolithophore), this protein is Photosystem II protein D1.